The chain runs to 360 residues: RNA-binding protein 1 (360 aa).

One can recognise an RRM 1 domain in the interval 6–82 (YKLFVGGIAK…KPVDVRKAIR (77 aa)). The stretch at 93–113 (MQFLERKVQQMNGGLREMSSN) forms a coiled coil. The region spanning 120–197 (KKIFVGGLSS…KRVEVKRAIP (78 aa)) is the RRM 2 domain.

In terms of tissue distribution, highly expressed in inflorescences and roots. Detected in leaves and seedlings, but not in stems. Expressed in vegetative shoot apex and root meristem, but not in root cap. Detected in flower buds, junction of pedicels, joints of immature siliques and pistil.

Its function is as follows. RNA binding protein. Can also bind in vitro to single-stranded DNA. This Arabidopsis thaliana (Mouse-ear cress) protein is RNA-binding protein 1 (RBP1).